We begin with the raw amino-acid sequence, 191 residues long: Large ribosomal subunit protein bL25 (191 aa).

The protein belongs to the bacterial ribosomal protein bL25 family. CTC subfamily. As to quaternary structure, part of the 50S ribosomal subunit; part of the 5S rRNA/L5/L18/L25 subcomplex. Contacts the 5S rRNA. Binds to the 5S rRNA independently of L5 and L18.

This is one of the proteins that binds to the 5S RNA in the ribosome where it forms part of the central protuberance. The protein is Large ribosomal subunit protein bL25 of Nitratidesulfovibrio vulgaris (strain DSM 19637 / Miyazaki F) (Desulfovibrio vulgaris).